Consider the following 236-residue polypeptide: Pyridoxal phosphate homeostasis protein (236 aa).

Lysine 36 carries the post-translational modification N6-(pyridoxal phosphate)lysine.

The protein belongs to the pyridoxal phosphate-binding protein YggS/PROSC family.

In terms of biological role, pyridoxal 5'-phosphate (PLP)-binding protein, which is involved in PLP homeostasis. In Vibrio cholerae serotype O1 (strain ATCC 39315 / El Tor Inaba N16961), this protein is Pyridoxal phosphate homeostasis protein.